Reading from the N-terminus, the 271-residue chain is Fatty acid elongase A (271 aa).

The next 7 helical transmembrane spans lie at 35-55, 68-88, 102-122, 139-159, 165-185, 198-220, and 237-257; these read ILFPIVCSFGYLALIYGLQIF, AMFHNLFLCLLSLLMFLGIVI, IICKPIDSGLVQFSYYIFYLS, SLLFLHVWHHFITLWLVWANL, CQWVDISANCFVHIVMYFYYF, HITTCQIIQFIVDMSSHLAWHFY, and TSAFSDFVILSFLGLFIQFFV.

This sequence belongs to the ELO family.

Its subcellular location is the membrane. The enzyme catalyses a very-long-chain acyl-CoA + malonyl-CoA + H(+) = a very-long-chain 3-oxoacyl-CoA + CO2 + CoA. Functionally, fatty acid elongase with strict substrate specificity for monounsaturated fatty acids, in particular 16:1 (delta-9) to produce the unusual 18:1 (delta-11) fatty acid. This chain is Fatty acid elongase A (eloA), found in Dictyostelium discoideum (Social amoeba).